The chain runs to 201 residues: 3-isopropylmalate dehydratase small subunit (201 aa).

The protein belongs to the LeuD family. LeuD type 1 subfamily. Heterodimer of LeuC and LeuD.

The enzyme catalyses (2R,3S)-3-isopropylmalate = (2S)-2-isopropylmalate. It functions in the pathway amino-acid biosynthesis; L-leucine biosynthesis; L-leucine from 3-methyl-2-oxobutanoate: step 2/4. In terms of biological role, catalyzes the isomerization between 2-isopropylmalate and 3-isopropylmalate, via the formation of 2-isopropylmaleate. In Rhodopseudomonas palustris (strain BisA53), this protein is 3-isopropylmalate dehydratase small subunit.